We begin with the raw amino-acid sequence, 207 residues long: MTSRKKVLLKVIILGDSGVGKTSLMNQYVNKKFSNQYKATIGADFLTKEVMVDDRLVTMQIWDTAGQERFQSLGVAFYRGADCCVLVFDVTAPNTFKTLDSWRDEFLIQASPRDPENFPFVVLGNKIDLENRQVATKRAQAWCYSKNNIPYFETSAKEAINVEQAFQTIARNALKQETEVELYNEFPEPIKLDKNERAKASAESCSC.

Threonine 2 is subject to N-acetylthreonine. Positions 17, 18, 19, 20, 21, 22, 23, 34, 35, 37, and 40 each coordinate GTP. Residue threonine 22 participates in Mg(2+) binding. A Switch 1 motif is present at residues 28–41 (YVNKKFSNQYKATI). 2 residues coordinate Mg(2+): threonine 40 and aspartate 63. A GTP-binding site is contributed by glycine 66. A Switch 2 motif is present at residues 67–82 (QERFQSLGVAFYRGAD). Serine 72 carries the phosphoserine modification. 5 residues coordinate GTP: asparagine 125, lysine 126, aspartate 128, alanine 156, and lysine 157. Residues lysine 191 and lysine 194 each participate in a glycyl lysine isopeptide (Lys-Gly) (interchain with G-Cter in ubiquitin) cross-link. 2 S-geranylgeranyl cysteine lipidation sites follow: cysteine 205 and cysteine 207. Cysteine 207 is subject to Cysteine methyl ester.

It belongs to the small GTPase superfamily. Rab family. In terms of assembly, interacts with NTRK1/TRKA. Interacts with RILP. Interacts with PSMA7. Interacts with RNF115. Interacts with and FYCO1. Interacts with the PIK3C3/VPS34-PIK3R4 complex. The GTP-bound form interacts with OSBPL1A. The GTP-bound form interacts with RAC1. Interacts with CLN3. Interacts with CHM, the substrate-binding subunit of the Rab geranylgeranyltransferase complex. Interacts with C9orf72. Does not interact with HPS4 and the BLOC-3 complex (heterodimer of HPS1 and HPS4). Interacts with CLN5. Interacts with PLEKHM1 (via N- and C-terminus). Interacts with PRPH; the interaction is direct. Interacts with VPS13A. The GDP-bound form interacts with RIMOC1. Interacts with the MON1A-CCZ1B complex and this interaction is enhanced in the presence of RIMOC1. Interacts with VPS39 and VPS41. Forms a ternary complex with LAMP2 and RUFY4; the interaction with LAMP2 is mediated by RUFY4 (via RUN and coiled coil domains). Mg(2+) serves as cofactor. Post-translationally, deubiquitination at Lys-191 and Lys-194 by USP32. Phosphorylated at Ser-72 by LRRK1; phosphorylation is dependent on protein kinase C (PKC) activation of LRRK1. In terms of processing, prenylated. Prenylation is required for association with cellular membranes. In terms of tissue distribution, expressed in osteoclasts and in neurons.

The protein localises to the cytoplasmic vesicle. The protein resides in the phagosome membrane. It is found in the late endosome membrane. Its subcellular location is the lysosome membrane. It localises to the melanosome membrane. The protein localises to the autophagosome membrane. The protein resides in the lipid droplet. It is found in the endosome membrane. Its subcellular location is the mitochondrion membrane. The enzyme catalyses GTP + H2O = GDP + phosphate + H(+). Its activity is regulated as follows. Regulated by guanine nucleotide exchange factors (GEFs) which promote the exchange of bound GDP for free GTP. Regulated by GTPase activating proteins (GAPs) which increase the GTP hydrolysis activity. Inhibited by GDP dissociation inhibitors (GDIs). Its function is as follows. The small GTPases Rab are key regulators of intracellular membrane trafficking, from the formation of transport vesicles to their fusion with membranes. Rabs cycle between an inactive GDP-bound form and an active GTP-bound form that is able to recruit to membranes different sets of downstream effectors directly responsible for vesicle formation, movement, tethering and fusion. In its active state, RAB7A binds to a variety of effector proteins playing a key role in the regulation of endo-lysosomal trafficking. Governs early-to-late endosomal maturation, microtubule minus-end as well as plus-end directed endosomal migration and positioning, and endosome-lysosome transport through different protein-protein interaction cascades. Also plays a central role in growth-factor-mediated cell signaling, nutrient-transporter-mediated nutrient uptake, neurotrophin transport in the axons of neurons and lipid metabolism. Also involved in regulation of some specialized endosomal membrane trafficking, such as maturation of melanosomes, pathogen-induced phagosomes (or vacuoles) and autophagosomes. Plays a role in the maturation and acidification of phagosomes that engulf pathogens, such as S.aureus and Mycobacteria. Plays a role in the fusion of phagosomes with lysosomes. In concert with RAC1, plays a role in regulating the formation of RBs (ruffled borders) in osteoclasts. Controls the endosomal trafficking and neurite outgrowth signaling of NTRK1/TRKA. Regulates the endocytic trafficking of the EGF-EGFR complex by regulating its lysosomal degradation. Involved in the ADRB2-stimulated lipolysis through lipophagy, a cytosolic lipase-independent autophagic pathway. Required for the exosomal release of SDCBP, CD63 and syndecan. Required for vesicular trafficking and cell surface expression of ACE2. May play a role in PRPH neuronal intermediate filament assembly. This Rattus norvegicus (Rat) protein is Ras-related protein Rab-7a.